The sequence spans 303 residues: N-acetylmuramic acid 6-phosphate etherase (303 aa).

An SIS domain is found at 61-224 (IVQAFQQGGR…TTASMILLGK (164 aa)). The active-site Proton donor is E89. Residue E120 is part of the active site.

Belongs to the GCKR-like family. MurNAc-6-P etherase subfamily. Homodimer.

The catalysed reaction is N-acetyl-D-muramate 6-phosphate + H2O = N-acetyl-D-glucosamine 6-phosphate + (R)-lactate. It participates in amino-sugar metabolism; 1,6-anhydro-N-acetylmuramate degradation. Its pathway is amino-sugar metabolism; N-acetylmuramate degradation. It functions in the pathway cell wall biogenesis; peptidoglycan recycling. Specifically catalyzes the cleavage of the D-lactyl ether substituent of MurNAc 6-phosphate, producing GlcNAc 6-phosphate and D-lactate. Together with AnmK, is also required for the utilization of anhydro-N-acetylmuramic acid (anhMurNAc) either imported from the medium or derived from its own cell wall murein, and thus plays a role in cell wall recycling. The chain is N-acetylmuramic acid 6-phosphate etherase (murQ) from Haemophilus influenzae (strain ATCC 51907 / DSM 11121 / KW20 / Rd).